We begin with the raw amino-acid sequence, 150 residues long: Non-specific lipid transfer protein GPI-anchored 7 (150 aa).

An N-terminal signal peptide occupies residues 1–25 (MTKTMMIFAAAMTVMALLLVPTIEA). 4 cysteine pairs are disulfide-bonded: Cys29–Cys66, Cys36–Cys50, Cys51–Cys92, and Cys64–Cys101. Asn41, Asn79, and Asn93 each carry an N-linked (GlcNAc...) asparagine glycan. The tract at residues 103-125 (AKGAPSPKASLPPPAPAGNTKKD) is disordered. Asp125 is lipidated: GPI-anchor amidated aspartate. The propeptide at 126–150 (AGAGNKLAGYGVTTVILSLISSIFF) is removed in mature form.

This sequence belongs to the plant LTP family. In terms of tissue distribution, up-regulated in the epidermis of stems.

It is found in the cell membrane. In terms of biological role, probable lipid transfer protein. In Arabidopsis thaliana (Mouse-ear cress), this protein is Non-specific lipid transfer protein GPI-anchored 7.